A 292-amino-acid chain; its full sequence is Small ribosomal subunit biogenesis GTPase RsgA (292 aa).

One can recognise a CP-type G domain in the interval 62-213 (KNSLVRPPIV…IADTPGFSSL (152 aa)). GTP is bound by residues 111-114 (SKMD) and 156-164 (GQTGVGKST). Zn(2+)-binding residues include C237, C242, H244, and C250.

This sequence belongs to the TRAFAC class YlqF/YawG GTPase family. RsgA subfamily. In terms of assembly, monomer. Associates with 30S ribosomal subunit, binds 16S rRNA. Zn(2+) is required as a cofactor.

Its subcellular location is the cytoplasm. In terms of biological role, one of several proteins that assist in the late maturation steps of the functional core of the 30S ribosomal subunit. Helps release RbfA from mature subunits. May play a role in the assembly of ribosomal proteins into the subunit. Circularly permuted GTPase that catalyzes slow GTP hydrolysis, GTPase activity is stimulated by the 30S ribosomal subunit. The protein is Small ribosomal subunit biogenesis GTPase RsgA of Streptococcus pneumoniae serotype 4 (strain ATCC BAA-334 / TIGR4).